The following is a 1218-amino-acid chain: NACHT, LRR and PYD domains-containing protein 1a allele 1 (1218 aa).

The segment at 1–61 is disordered; that stretch reads MEESQSKQES…SLPGWSSTSN (61 aa). A compositionally biased stretch (polar residues) spans 7 to 29; that stretch reads KQESNTRVAQHGSQQDVDPTFQT. The NACHT domain maps to 175-484; sequence QLVIIEGAAG…EFFAAMSYIL (310 aa). 181–188 is a binding site for ATP; that stretch reads GAAGIGKS. 3 LRR repeats span residues 343–364, 673–693, and 730–750; these read KERNTIIDFNLIGSIPVLLTLC, NLEELDLSGNPLSYSAVRSLC, and RLAELDLRLNDLGDNGVRQLC. The segment covering 799–815 has biased composition (polar residues); that stretch reads TMPTENTDGEESLTSSK. The interval 799–842 is disordered; that stretch reads TMPTENTDGEESLTSSKQQQQQSGDKHMEPLGTDDDFWGPSGPV. Residues 835–968 form a ZU5 region; it reads FWGPSGPVST…HFAVLENPSF (134 aa). The 284-residue stretch at 835 to 1118 folds into the FIIND domain; that stretch reads FWGPSGPVST…LRPALPRMAS (284 aa). The segment at 969–1118 is UPA; that stretch reads SPMGVLLRMI…LRPALPRMAS (150 aa). In terms of domain architecture, CARD spans 1122 to 1211; it reads DAPALLHFVD…HLIMDLLEKS (90 aa).

It belongs to the NLRP family. In terms of assembly, interacts (via LRR repeats) with BCL2 and BCL2L1 (via the loop between motifs BH4 and BH3). Interacts with NOD2; this interaction is enhanced in the presence of muramyl dipeptide (MDP) and increases IL1B release. Interacts with EIF2AK2/PKR; this interaction requires EIF2AK2 activity, is accompanied by EIF2AK2 autophosphorylation and promotes inflammasome assembly in response to danger-associated signals. Interacts with MEFV; this interaction targets Nlrp1a to degradation by autophagy, hence preventing excessive IL1B- and IL18-mediated inflammation. Interacts with DPP9; leading to inhibit activation of the inflammasome. DPP9 acts via formation of a ternary complex, composed of a DPP9 homodimer, one full-length NLRP1 protein, and one cleaved C-terminus of Nlrp1a (NACHT, LRR and PYD domains-containing protein 1a, C-terminus). Interacts with DPP8; leading to inhibit activation of the inflammasome, probably via formation of a ternary complex with DPP8. Interacts with the C-terminal part of Nlrp1a (NACHT, LRR and PYD domains-containing protein 1a, C-terminus) in absence of pathogens and other damage-associated signals. As to quaternary structure, interacts with the N-terminal part of Nlrp1a (NACHT, LRR and PYD domains-containing protein 1a, N-terminus) in absence of pathogens and other damage-associated signals. Homomultimer; forms the Nlrp1a inflammasome polymeric complex, a filament composed of homopolymers of this form in response to pathogens and other damage-associated signals. The Nlrp1a inflammasome polymeric complex directly recruits pro-caspase-1 (proCASP1) independently of PYCARD/ASC. Interacts (via CARD domain) with CASP1 (via CARD domain); leading to CASP1 activation. Post-translationally, autocatalytically cleaved. Autocatalytic cleavage in FIIND region occurs constitutively, prior to activation signals, and is required for inflammasome activity (IL1B release), possibly by facilitating CASP1 binding. Both N- and C-terminal parts remain associated non-covalently. In terms of processing, (Microbial infection) Cleavage by B.anthracis lethal toxin (LT) endopeptidase promotes ubiquitination and degradation of the N-terminal part, releasing the cleaved C-terminal part of the protein (NACHT, LRR and PYD domains-containing protein 1a, C-terminus), which polymerizes and forms the Nlrp1a inflammasome. Ubiquitinated in response to pathogen-associated signals, leading to its degradation by the proteasome and subsequent release of the cleaved C-terminal part of the protein (NACHT, LRR and PYD domains-containing protein 1a, C-terminus), which polymerizes and forms the Nlrp1a inflammasome.

The protein localises to the cytoplasm. It localises to the cytosol. It is found in the nucleus. Its subcellular location is the inflammasome. Its activity is regulated as follows. Activated by cleavage by B.anthracis lethal toxin (LT) endopeptidase. Cleavage by LT promotes ubiquitination and degradation of the N-terminal part, releasing the cleaved C-terminal part of the protein (NACHT, LRR and PYD domains-containing protein 1a, C-terminus), which polymerizes and forms the Nlrp1a inflammasome. Nlrp1a inflammasome is inhibited by DPP8 and DPP9, which sequester the C-terminal fragment of Nlrp1a (NACHT, LRR and PYD domains-containing protein 1a, C-terminus) in a ternary complex, thereby preventing Nlrp1a oligomerization and activation. Nlrp1a inflammasome is weakly activated by Val-boroPro (Talabostat, PT-100), an inhibitor of dipeptidyl peptidases DPP8 and DPP9. Val-boroPro relieves inhibition of DPP8 and/or DPP9 by promoting disruption of the ternary complex, releasing its C-terminal part from autoinhibition. Weakly activated by Toxoplasma gondii. Functionally, acts as the sensor component of the Nlrp1a inflammasome, which mediates inflammasome activation in response to various pathogen-associated signals, leading to subsequent pyroptosis. Inflammasomes are supramolecular complexes that assemble in the cytosol in response to pathogens and other damage-associated signals and play critical roles in innate immunity and inflammation. Acts as a recognition receptor (PRR): recognizes specific pathogens and other damage-associated signals, such as B.anthracis lethal toxin (LT) or Val-boroPro inhibitor, and mediates the formation of the inflammasome polymeric complex. In response to pathogen-associated signals, the N-terminal part of Nlrp1a is degraded by the proteasome, releasing the cleaved C-terminal part of the protein (NACHT, LRR and PYD domains-containing protein 1a, C-terminus), which polymerizes to initiate the formation of the inflammasome complex: the inflammasome directly recruits pro-caspase-1 (proCASP1) independently of PYCARD/ASC and promotes caspase-1 (CASP1) activation, which subsequently cleaves and activates inflammatory cytokines IL1B and IL18 and gasdermin-D (GSDMD), leading to pyroptosis. In the absence of GSDMD expression, the Nlrp1a inflammasome is able to recruit and activate CASP8, leading to activation of gasdermin-E (GSDME). Its function is as follows. Constitutes the precursor of the Nlrp1a inflammasome, which mediates autoproteolytic processing within the FIIND domain to generate the N-terminal and C-terminal parts, which are associated non-covalently in absence of pathogens and other damage-associated signals. Regulatory part that prevents formation of the Nlrp1a inflammasome: in absence of pathogens and other damage-associated signals, interacts with the C-terminal part of Nlrp1a (NACHT, LRR and PYD domains-containing protein 1a, C-terminus), preventing activation of the Nlrp1a inflammasome. In response to pathogen-associated signals, this part is ubiquitinated by the N-end rule pathway and degraded by the proteasome, releasing the cleaved C-terminal part of the protein, which polymerizes and forms the Nlrp1a inflammasome. In terms of biological role, constitutes the active part of the Nlrp1a inflammasome. In absence of pathogens and other damage-associated signals, interacts with the N-terminal part of Nlrp1a (NACHT, LRR and PYD domains-containing protein 1a, N-terminus), preventing activation of the Nlrp1a inflammasome. In response to pathogen-associated signals, the N-terminal part of Nlrp1a is degraded by the proteasome, releasing this form, which polymerizes to form the Nlrp1a inflammasome complex: the Nlrp1a inflammasome complex then directly recruits pro-caspase-1 (proCASP1) and promotes caspase-1 (CASP1) activation, leading to gasdermin-D (GSDMD) cleavage and subsequent pyroptosis. This is NACHT, LRR and PYD domains-containing protein 1a allele 1 from Rattus norvegicus (Rat).